Here is a 592-residue protein sequence, read N- to C-terminus: 1,4-alpha-glucan branching enzyme GlgB 2 (592 aa).

Asp-274 (nucleophile) is an active-site residue. Glu-327 acts as the Proton donor in catalysis.

This sequence belongs to the glycosyl hydrolase 13 family. GlgB subfamily. In terms of assembly, monomer.

The enzyme catalyses Transfers a segment of a (1-&gt;4)-alpha-D-glucan chain to a primary hydroxy group in a similar glucan chain.. The protein operates within glycan biosynthesis; glycogen biosynthesis. Catalyzes the formation of the alpha-1,6-glucosidic linkages in glycogen by scission of a 1,4-alpha-linked oligosaccharide from growing alpha-1,4-glucan chains and the subsequent attachment of the oligosaccharide to the alpha-1,6 position. The polypeptide is 1,4-alpha-glucan branching enzyme GlgB 2 (Streptomyces avermitilis (strain ATCC 31267 / DSM 46492 / JCM 5070 / NBRC 14893 / NCIMB 12804 / NRRL 8165 / MA-4680)).